The chain runs to 201 residues: Translation initiation factor IF-3 (201 aa).

Positions 167-201 (PHRGAKTRARARHPGEPAGGPPPKPTAGDSKAAPN) are disordered. Basic residues predominate over residues 169–178 (RGAKTRARAR).

This sequence belongs to the IF-3 family. In terms of assembly, monomer.

It localises to the cytoplasm. IF-3 binds to the 30S ribosomal subunit and shifts the equilibrium between 70S ribosomes and their 50S and 30S subunits in favor of the free subunits, thus enhancing the availability of 30S subunits on which protein synthesis initiation begins. This Mycobacterium bovis (strain ATCC BAA-935 / AF2122/97) protein is Translation initiation factor IF-3.